We begin with the raw amino-acid sequence, 224 residues long: uncharacterized protein (224 aa).

This is an uncharacterized protein from Listeria innocua serovar 6a (strain ATCC BAA-680 / CLIP 11262).